Consider the following 279-residue polypeptide: Putative pyruvate, phosphate dikinase regulatory protein (279 aa).

153–160 (GVSRTSKT) contributes to the ADP binding site.

The protein belongs to the pyruvate, phosphate/water dikinase regulatory protein family. PDRP subfamily.

It catalyses the reaction N(tele)-phospho-L-histidyl/L-threonyl-[pyruvate, phosphate dikinase] + ADP = N(tele)-phospho-L-histidyl/O-phospho-L-threonyl-[pyruvate, phosphate dikinase] + AMP + H(+). The catalysed reaction is N(tele)-phospho-L-histidyl/O-phospho-L-threonyl-[pyruvate, phosphate dikinase] + phosphate + H(+) = N(tele)-phospho-L-histidyl/L-threonyl-[pyruvate, phosphate dikinase] + diphosphate. Bifunctional serine/threonine kinase and phosphorylase involved in the regulation of the pyruvate, phosphate dikinase (PPDK) by catalyzing its phosphorylation/dephosphorylation. The chain is Putative pyruvate, phosphate dikinase regulatory protein from Bradyrhizobium sp. (strain ORS 278).